The primary structure comprises 96 residues: Co-chaperonin GroES (96 aa).

The protein belongs to the GroES chaperonin family. Heptamer of 7 subunits arranged in a ring. Interacts with the chaperonin GroEL.

It localises to the cytoplasm. Together with the chaperonin GroEL, plays an essential role in assisting protein folding. The GroEL-GroES system forms a nano-cage that allows encapsulation of the non-native substrate proteins and provides a physical environment optimized to promote and accelerate protein folding. GroES binds to the apical surface of the GroEL ring, thereby capping the opening of the GroEL channel. The sequence is that of Co-chaperonin GroES from Paraburkholderia phytofirmans (strain DSM 17436 / LMG 22146 / PsJN) (Burkholderia phytofirmans).